Here is a 340-residue protein sequence, read N- to C-terminus: Phosphatidylglycerol--prolipoprotein diacylglyceryl transferase (340 aa).

4 consecutive transmembrane segments (helical) span residues 19–39 (IPLR…VWLG), 54–74 (ADIA…YHVI), 93–113 (IWEG…GAWI), and 119–139 (GIPL…AQAF). R141 contributes to the a 1,2-diacyl-sn-glycero-3-phospho-(1'-sn-glycerol) binding site. 3 helical membrane passes run 176–196 (HPTF…VIWA), 202–221 (LGHG…GRAW), and 238–258 (LNDW…VLSS). The interval 266–340 (EIVEPGASDT…ESAAESAKKV (75 aa)) is disordered. Residues 284–294 (DLGKDEDKATT) show a composition bias toward basic and acidic residues. The segment covering 295–307 (DKATATDTSTTTD) has biased composition (low complexity). The segment covering 326–340 (PSEKTESAAESAKKV) has biased composition (basic and acidic residues).

This sequence belongs to the Lgt family.

It localises to the cell membrane. The enzyme catalyses L-cysteinyl-[prolipoprotein] + a 1,2-diacyl-sn-glycero-3-phospho-(1'-sn-glycerol) = an S-1,2-diacyl-sn-glyceryl-L-cysteinyl-[prolipoprotein] + sn-glycerol 1-phosphate + H(+). It participates in protein modification; lipoprotein biosynthesis (diacylglyceryl transfer). In terms of biological role, catalyzes the transfer of the diacylglyceryl group from phosphatidylglycerol to the sulfhydryl group of the N-terminal cysteine of a prolipoprotein, the first step in the formation of mature lipoproteins. In Streptomyces avermitilis (strain ATCC 31267 / DSM 46492 / JCM 5070 / NBRC 14893 / NCIMB 12804 / NRRL 8165 / MA-4680), this protein is Phosphatidylglycerol--prolipoprotein diacylglyceryl transferase.